We begin with the raw amino-acid sequence, 1097 residues long: FHIP family protein GK23746 (1097 aa).

The segment covering 1-21 (MSWLRSSPLRQSLTRTTSSGN) has biased composition (polar residues). Residues 1-25 (MSWLRSSPLRQSLTRTTSSGNGIRP) form a disordered region. Residue Ser-491 is modified to Phosphoserine. Disordered regions lie at residues 639–684 (DVSA…SGRR), 820–856 (NENS…RSAY), and 932–1042 (NNQQ…SEPV). Positions 641–654 (SASSGNGTGSVVVG) are enriched in low complexity. Residue Ser-823 is modified to Phosphoserine. Low complexity-rich tracts occupy residues 824-852 (PLHQ…GAQQ) and 932-948 (NNQQ…SSSS). Residues 949–962 (AVTTCETSLSTQPH) show a composition bias toward polar residues. Positions 973–985 (TTSSTISTSSGTT) are enriched in low complexity. Positions 986–995 (AGSGGGGGSG) are enriched in gly residues. Composition is skewed to low complexity over residues 996–1006 (SNSSFSIGGST) and 1013–1022 (SNNTTNSSST).

This sequence belongs to the FHIP family.

The sequence is that of FHIP family protein GK23746 from Drosophila willistoni (Fruit fly).